A 243-amino-acid chain; its full sequence is uncharacterized protein (243 aa).

Residues 1–18 (MSNSHYNNYQQQQPHSSN) show a composition bias toward low complexity. The disordered stretch occupies residues 1–30 (MSNSHYNNYQQQQPHSSNGDPEYQHQQMVH). Residues 38-232 (GHGMKTVAVP…MHYKEYREYQ (195 aa)) enclose the AMMECR1 domain.

This is an uncharacterized protein from Drosophila melanogaster (Fruit fly).